The chain runs to 250 residues: Envelope glycoprotein L (250 aa).

Residues M1–A18 form the signal peptide. A gL betaherpesvirus-type domain is found at K31 to R239. The cysteines at positions 136 and 141 are disulfide-linked.

It belongs to the herpesviridae glycoprotein L (gL) family. Betaherpesvirinae gL subfamily. Interacts with glycoprotein H (gH); this interaction is necessary for the correct processing and cell surface expression of gH. Part of a gH-gL-gO complex.

Its subcellular location is the virion membrane. It localises to the host cell membrane. The protein resides in the host Golgi apparatus. It is found in the host trans-Golgi network. The heterodimer glycoprotein H-glycoprotein L is required for the fusion of viral and plasma membranes leading to virus entry into the host cell. Acts as a functional inhibitor of gH and maintains gH in an inhibited form. Upon binding to host integrins, gL dissociates from gH leading to activation of the viral fusion glycoproteins gB and gH. The polypeptide is Envelope glycoprotein L (Human herpesvirus 6A (strain Uganda-1102) (HHV-6 variant A)).